The following is a 673-amino-acid chain: Flagellar hook-associated protein 2 (673 aa).

The stretch at 611–664 forms a coiled coil; sequence SKTSTLNTRISSSQKNIETLESKLKRKEQDLKTKYGQMEASLNSLEKQSDSITN. The interval 649 to 673 is disordered; that stretch reads EASLNSLEKQSDSITNFSDNQRSGR. A compositionally biased stretch (polar residues) spans 650–673; that stretch reads ASLNSLEKQSDSITNFSDNQRSGR.

The protein belongs to the FliD family. Homopentamer.

Its subcellular location is the periplasmic flagellum. It localises to the periplasm. Its function is as follows. Required for the morphogenesis and for the elongation of the flagellar filament by facilitating polymerization of the flagellin monomers at the tip of growing filament. Forms a capping structure, which prevents flagellin subunits (transported through the central channel of the flagellum) from leaking out without polymerization at the distal end. This Treponema maltophilum protein is Flagellar hook-associated protein 2 (fliD).